Consider the following 158-residue polypeptide: NAD(P)H-quinone oxidoreductase subunit J, chloroplastic (158 aa).

It belongs to the complex I 30 kDa subunit family. NDH is composed of at least 16 different subunits, 5 of which are encoded in the nucleus.

It localises to the plastid. The protein resides in the chloroplast thylakoid membrane. It catalyses the reaction a plastoquinone + NADH + (n+1) H(+)(in) = a plastoquinol + NAD(+) + n H(+)(out). It carries out the reaction a plastoquinone + NADPH + (n+1) H(+)(in) = a plastoquinol + NADP(+) + n H(+)(out). Its function is as follows. NDH shuttles electrons from NAD(P)H:plastoquinone, via FMN and iron-sulfur (Fe-S) centers, to quinones in the photosynthetic chain and possibly in a chloroplast respiratory chain. The immediate electron acceptor for the enzyme in this species is believed to be plastoquinone. Couples the redox reaction to proton translocation, and thus conserves the redox energy in a proton gradient. This Lactuca sativa (Garden lettuce) protein is NAD(P)H-quinone oxidoreductase subunit J, chloroplastic.